Reading from the N-terminus, the 260-residue chain is tRNA pseudouridine synthase A (260 aa).

The active-site Nucleophile is aspartate 52. Tyrosine 111 lines the substrate pocket.

It belongs to the tRNA pseudouridine synthase TruA family. As to quaternary structure, homodimer.

It carries out the reaction uridine(38/39/40) in tRNA = pseudouridine(38/39/40) in tRNA. Its function is as follows. Formation of pseudouridine at positions 38, 39 and 40 in the anticodon stem and loop of transfer RNAs. In Roseobacter denitrificans (strain ATCC 33942 / OCh 114) (Erythrobacter sp. (strain OCh 114)), this protein is tRNA pseudouridine synthase A.